Consider the following 164-residue polypeptide: Phosphopantetheine adenylyltransferase (164 aa).

A substrate-binding site is contributed by Ser11. Residues 11–12 and His19 each bind ATP; that span reads SF. Substrate is bound by residues Lys43, Ala76, and Arg90. Residues 91–93, Glu101, and 126–132 contribute to the ATP site; these read GLR and YQHISSS.

This sequence belongs to the bacterial CoaD family. In terms of assembly, homohexamer. Mg(2+) is required as a cofactor.

It localises to the cytoplasm. It carries out the reaction (R)-4'-phosphopantetheine + ATP + H(+) = 3'-dephospho-CoA + diphosphate. Its pathway is cofactor biosynthesis; coenzyme A biosynthesis; CoA from (R)-pantothenate: step 4/5. Reversibly transfers an adenylyl group from ATP to 4'-phosphopantetheine, yielding dephospho-CoA (dPCoA) and pyrophosphate. This chain is Phosphopantetheine adenylyltransferase, found in Streptococcus gordonii (strain Challis / ATCC 35105 / BCRC 15272 / CH1 / DL1 / V288).